The sequence spans 85 residues: DNA-directed RNA polymerase subunit Rpo11 (85 aa).

It belongs to the archaeal Rpo11/eukaryotic RPB11/RPC19 RNA polymerase subunit family. Part of the RNA polymerase complex.

It is found in the cytoplasm. The catalysed reaction is RNA(n) + a ribonucleoside 5'-triphosphate = RNA(n+1) + diphosphate. DNA-dependent RNA polymerase (RNAP) catalyzes the transcription of DNA into RNA using the four ribonucleoside triphosphates as substrates. In Methanothermobacter thermautotrophicus (strain ATCC 29096 / DSM 1053 / JCM 10044 / NBRC 100330 / Delta H) (Methanobacterium thermoautotrophicum), this protein is DNA-directed RNA polymerase subunit Rpo11.